An 82-amino-acid polypeptide reads, in one-letter code: DNA-directed RNA polymerase subunit Rpo5 (82 aa).

The protein belongs to the archaeal Rpo5/eukaryotic RPB5 RNA polymerase subunit family. As to quaternary structure, part of the RNA polymerase complex.

The protein resides in the cytoplasm. The enzyme catalyses RNA(n) + a ribonucleoside 5'-triphosphate = RNA(n+1) + diphosphate. Functionally, DNA-dependent RNA polymerase (RNAP) catalyzes the transcription of DNA into RNA using the four ribonucleoside triphosphates as substrates. The chain is DNA-directed RNA polymerase subunit Rpo5 from Thermococcus kodakarensis (strain ATCC BAA-918 / JCM 12380 / KOD1) (Pyrococcus kodakaraensis (strain KOD1)).